We begin with the raw amino-acid sequence, 382 residues long: Histidinol-phosphate aminotransferase (382 aa).

The segment at 1–28 (MTSAPRPRPTLDDLPLREDLRGKSPYGA) is disordered. Over residues 9–22 (PTLDDLPLREDLRG) the composition is skewed to basic and acidic residues. Lysine 233 bears the N6-(pyridoxal phosphate)lysine mark.

The protein belongs to the class-II pyridoxal-phosphate-dependent aminotransferase family. Histidinol-phosphate aminotransferase subfamily. In terms of assembly, homodimer. Pyridoxal 5'-phosphate serves as cofactor.

It carries out the reaction L-histidinol phosphate + 2-oxoglutarate = 3-(imidazol-4-yl)-2-oxopropyl phosphate + L-glutamate. It participates in amino-acid biosynthesis; L-histidine biosynthesis; L-histidine from 5-phospho-alpha-D-ribose 1-diphosphate: step 7/9. In Mycobacterium marinum (strain ATCC BAA-535 / M), this protein is Histidinol-phosphate aminotransferase.